The chain runs to 479 residues: CBL-interacting serine/threonine-protein kinase 10 (479 aa).

In terms of domain architecture, Protein kinase spans 12 to 266 (YDVGRLLGQG…IARIRESSWF (255 aa)). Residues 18-26 (LGQGTFAKV) and Lys41 contribute to the ATP site. Asp134 serves as the catalytic Proton acceptor. An activation loop region spans residues 152-181 (DFGLSALADCKRQDGLLHTTCGTPAYVAPE). At Ser156 the chain carries Phosphoserine. Thr170 is modified (phosphothreonine). Residues 286 to 323 (SVEAGTAGTNENGAGPSENGAGPSENGDRVTEENHTDE) are disordered. Positions 288-300 (EAGTAGTNENGAG) are enriched in low complexity. Over residues 311-323 (NGDRVTEENHTDE) the composition is skewed to basic and acidic residues. Positions 322 to 346 (DEPTNLNAFDLIALSAGFDLAGLFG) constitute an NAF domain. The segment at 350 to 379 (KRESRFTSQKPASVIISKLEEVAQRLKLSI) is PPI. Residues 456–479 (SQQETEYQQQQQQEQQEQEEPLKF) are disordered. The segment covering 457–470 (QQETEYQQQQQQEQ) has biased composition (low complexity).

The protein belongs to the protein kinase superfamily. CAMK Ser/Thr protein kinase family. SNF1 subfamily. Interacts with CBL4/SOS3. Requires Mn(2+) as cofactor. Mostly expressed in roots.

The enzyme catalyses L-seryl-[protein] + ATP = O-phospho-L-seryl-[protein] + ADP + H(+). The catalysed reaction is L-threonyl-[protein] + ATP = O-phospho-L-threonyl-[protein] + ADP + H(+). In terms of biological role, CIPK serine-threonine protein kinases interact with CBL proteins. Binding of a CBL protein to the regulatory NAF domain of CIPK protein lead to the activation of the kinase in a calcium-dependent manner. The protein is CBL-interacting serine/threonine-protein kinase 10 (CIPK10) of Arabidopsis thaliana (Mouse-ear cress).